The sequence spans 276 residues: Undecaprenyl-diphosphatase (276 aa).

8 consecutive transmembrane segments (helical) span residues 2–22 (LEIL…FLPI), 43–63 (FIDM…VVLY), 83–103 (WTLW…GLPL), 111–131 (LMNW…FIVI), 147–167 (TLPY…LIPG), 186–206 (YVAA…ASLL), 224–244 (LILA…IRFL), and 255–275 (AFGW…ALLA).

This sequence belongs to the UppP family.

It is found in the cell membrane. The enzyme catalyses di-trans,octa-cis-undecaprenyl diphosphate + H2O = di-trans,octa-cis-undecaprenyl phosphate + phosphate + H(+). Its function is as follows. Catalyzes the dephosphorylation of undecaprenyl diphosphate (UPP). Confers resistance to bacitracin. The sequence is that of Undecaprenyl-diphosphatase from Limosilactobacillus fermentum (strain NBRC 3956 / LMG 18251) (Lactobacillus fermentum).